The sequence spans 37 residues: Esculentin-2L (37 aa).

A disulfide bridge links Cys31 with Cys37.

Expressed by the skin glands.

The protein localises to the secreted. Its function is as follows. Antibacterial activity against Gram-positive bacterium S.aureus and Gram-negative bacterium E.coli. Has activity against C.albicans. The sequence is that of Esculentin-2L from Rana luteiventris (Columbia spotted frog).